The chain runs to 733 residues: MKSLVNLWGIYPFIRNNSLHGFAKIPRIVSTIPRQLRFSSLRHPTRQMDLIHDTVVVENLNTFAVVGQDQWKRKEPQPVQIDVYMRNNVQLAGEKDELKSTIHYGIASKLLRKEIEGSFFTTPKDLVNKIASLCFEDVIDTSHVSIKLTLPKCVLRSKNGLHYYAERERNSTSNFVDRIEFSDLELATILGIHAFERQEKQRVCLNISFANTEVEALEIARAIAEYVEQSAFLTIEALVVNLSKYLCFTKNLDDISIKAEKPSAITFANASAVQIYRTRSYFLQESLHKYESTKNKIAYLSFGSNIGDKFEQIQTALSMLHKIEGIRVLDVSPLYETEPMYYKDQPSFLNGVCKIETRMSPINLLRACQSIEQEMGRIKTILKGPRCIDLDIVLYEDCVYESEVLTIPHLGLQEREFVLRPLLALSPDLVHPYTHQPLQEALDKLPSQGIRLYSSFDNKKIINGALTMGILNVTPDSFSDGGKVSQNNILEKAKSMVGDGASILDIGGQSTKPGADPVSVEEELRRVIPMISLLRSSGITVPISIDTYYSKVAKLAIEAGANIINDVTGGMGDEKMLPLAASLQVPICIMHMRGTPETMKALSIYEKDIVEEVAVELSSRVEAAVQSGVHRYNIILDPGFGFAKTPKQSAGLLGRLHELMKKPQFKDMHWLSGPSRKGFTGYFTGDASPKDRIWGTSACVTASVLQGVSIVRVHDTKEMSKVVGMANAIRYVP.

DHNA stretches follow at residues 55–167 and 179–277; these read VVVE…YAER and IEFS…QIYR. Position 281 is a phosphotyrosine (Tyr281). An HPK region spans residues 295 to 454; the sequence is NKIAYLSFGS…LPSQGIRLYS (160 aa). Positions 465-724 constitute a Pterin-binding domain; the sequence is ALTMGILNVT…DTKEMSKVVG (260 aa). The tract at residues 467–733 is DHPS; it reads TMGILNVTPD…GMANAIRYVP (267 aa). Position 472 (Asn472) interacts with Mg(2+). Residues Thr511, Asp546, Asn565, Asp637, Lys677, and 712 to 714 contribute to the (7,8-dihydropterin-6-yl)methyl diphosphate site; that span reads RVH.

It in the N-terminal section; belongs to the DHNA family. The protein in the central section; belongs to the HPPK family. This sequence in the C-terminal section; belongs to the DHPS family. It depends on Mg(2+) as a cofactor.

Its subcellular location is the cytoplasm. The catalysed reaction is 7,8-dihydroneopterin = 6-hydroxymethyl-7,8-dihydropterin + glycolaldehyde. The enzyme catalyses 6-hydroxymethyl-7,8-dihydropterin + ATP = (7,8-dihydropterin-6-yl)methyl diphosphate + AMP + H(+). It carries out the reaction (7,8-dihydropterin-6-yl)methyl diphosphate + 4-aminobenzoate = 7,8-dihydropteroate + diphosphate. The protein operates within cofactor biosynthesis; tetrahydrofolate biosynthesis; 2-amino-4-hydroxy-6-hydroxymethyl-7,8-dihydropteridine diphosphate from 7,8-dihydroneopterin triphosphate: step 3/4. Its pathway is cofactor biosynthesis; tetrahydrofolate biosynthesis; 2-amino-4-hydroxy-6-hydroxymethyl-7,8-dihydropteridine diphosphate from 7,8-dihydroneopterin triphosphate: step 4/4. It participates in cofactor biosynthesis; tetrahydrofolate biosynthesis; 7,8-dihydrofolate from 2-amino-4-hydroxy-6-hydroxymethyl-7,8-dihydropteridine diphosphate and 4-aminobenzoate: step 1/2. In terms of biological role, catalyzes three sequential steps of tetrahydrofolate biosynthesis. The protein is Folic acid synthesis protein fol1 (fol1) of Schizosaccharomyces pombe (strain 972 / ATCC 24843) (Fission yeast).